Consider the following 87-residue polypeptide: Small ribosomal subunit protein bS20 (87 aa).

The interval 1–22 (MAHHKSALKRIKQNKRKQFRNK) is disordered.

This sequence belongs to the bacterial ribosomal protein bS20 family.

Functionally, binds directly to 16S ribosomal RNA. The chain is Small ribosomal subunit protein bS20 from Geobacter metallireducens (strain ATCC 53774 / DSM 7210 / GS-15).